We begin with the raw amino-acid sequence, 234 residues long: Orotidine 5'-phosphate decarboxylase (234 aa).

Substrate is bound by residues D17, K38, 65-74 (DLKLHDIPNT), T122, R184, Q193, G213, and R214. Catalysis depends on K67, which acts as the Proton donor.

The protein belongs to the OMP decarboxylase family. Type 1 subfamily. In terms of assembly, homodimer.

It carries out the reaction orotidine 5'-phosphate + H(+) = UMP + CO2. The protein operates within pyrimidine metabolism; UMP biosynthesis via de novo pathway; UMP from orotate: step 2/2. Catalyzes the decarboxylation of orotidine 5'-monophosphate (OMP) to uridine 5'-monophosphate (UMP). This Thermosynechococcus vestitus (strain NIES-2133 / IAM M-273 / BP-1) protein is Orotidine 5'-phosphate decarboxylase.